The following is a 121-amino-acid chain: LSM complex subunit lsm4 (121 aa).

Residues 2 to 75 form the Sm domain; sequence LPLTLLNATQ…IKYLRIQDEV (74 aa). A disordered region spans residues 82 to 121; that stretch reads QQAQQRENRGSRFRGRGQRGRGNYGHTAPNRRGRGRGGHM. Residues 110–121 are compositionally biased toward basic residues; sequence PNRRGRGRGGHM.

It belongs to the snRNP Sm proteins family. Component of the heptameric LSM1-LSM7 complex that forms a seven-membered ring structure with a donut shape. The LSm subunits are arranged in the order lsm1, lsm2, lsm3, lsm6, lsm5, lsm7 and lsm4. Component of the heptameric LSM2-LSM8 complex that forms a seven-membered ring structure with a donut shape. The LSm subunits are arranged in the order lsm8, lsm2, lsm3, lsm6, lsm5, lsm7 and lsm4.

The protein resides in the nucleus. The protein localises to the cytoplasm. Functionally, component of LSm protein complexes, which are involved in RNA processing and may function in a chaperone-like manner. Component of the cytoplasmic LSM1-LSM7 complex which is involved in mRNA degradation by activating the decapping step. The LSM1-LSM7 complex loads onto the 3'-end of single stranded RNA. Component of the nuclear LSM2-LSM8 complex, which is involved in spliceosome assembly. The LSM2-LSM8 complex plays a role in the biogenesis of the spliceosomal U4/U6-U5 tri-snRNP complex by accelerating prp24-mediated annealing of U4/U6 di-snRNA. The LSM2-LSM8 complex binds U6 snRNA terminating with a cyclic 2',3' phosphate group; RNA with an unmodified 3' hydroxyl or non-cyclic 3' phosphate is bound less tightly. The polypeptide is LSM complex subunit lsm4 (lsm4) (Schizosaccharomyces pombe (strain 972 / ATCC 24843) (Fission yeast)).